Reading from the N-terminus, the 84-residue chain is Small ribosomal subunit protein bS18 (84 aa).

This sequence belongs to the bacterial ribosomal protein bS18 family. As to quaternary structure, part of the 30S ribosomal subunit. Forms a tight heterodimer with protein bS6.

Its function is as follows. Binds as a heterodimer with protein bS6 to the central domain of the 16S rRNA, where it helps stabilize the platform of the 30S subunit. This chain is Small ribosomal subunit protein bS18, found in Dictyoglomus turgidum (strain DSM 6724 / Z-1310).